The following is a 236-amino-acid chain: RING-H2 finger protein ATL7 (236 aa).

The chain crosses the membrane as a helical span at residues 31-51; that stretch reads AFIFSVPICFTFIVLFVLYVI. An RING-type; atypical zinc finger spans residues 111–153; sequence CSVCLGDYQAEEKLQQMPSCGHTFHMECIDLWLTSHTTCPLCR. Residues 176 to 196 show a composition bias toward polar residues; sequence ENSNGGEASTQPDSQSATEAI. The disordered stretch occupies residues 176 to 236; it reads ENSNGGEAST…SDGCCTCRLG (61 aa). A compositionally biased stretch (basic and acidic residues) spans 197–221; that stretch reads SHTDDVEEGNRDSQEVSKETEENDR.

The protein belongs to the RING-type zinc finger family. ATL subfamily.

It is found in the membrane. The enzyme catalyses S-ubiquitinyl-[E2 ubiquitin-conjugating enzyme]-L-cysteine + [acceptor protein]-L-lysine = [E2 ubiquitin-conjugating enzyme]-L-cysteine + N(6)-ubiquitinyl-[acceptor protein]-L-lysine.. It functions in the pathway protein modification; protein ubiquitination. This Arabidopsis thaliana (Mouse-ear cress) protein is RING-H2 finger protein ATL7 (ATL7).